The sequence spans 132 residues: uncharacterized protein (132 aa).

The segment at 113-132 (LDPQSPLHSPPLSTSPDSRR) is disordered.

This is an uncharacterized protein from Saccharomyces cerevisiae (strain ATCC 204508 / S288c) (Baker's yeast).